The chain runs to 530 residues: Phosphoenolpyruvate carboxykinase (ATP) (530 aa).

Substrate is bound by residues arginine 59, tyrosine 198, and lysine 204. Residues lysine 204, histidine 223, and glycine 239–threonine 247 each bind ATP. Lysine 204 and histidine 223 together coordinate Mn(2+). Aspartate 260 serves as a coordination point for Mn(2+). ATP-binding positions include glutamate 288, arginine 325, arginine 440–isoleucine 441, and threonine 446. Arginine 325 lines the substrate pocket.

This sequence belongs to the phosphoenolpyruvate carboxykinase (ATP) family. It depends on Mn(2+) as a cofactor.

It is found in the cytoplasm. The enzyme catalyses oxaloacetate + ATP = phosphoenolpyruvate + ADP + CO2. The protein operates within carbohydrate biosynthesis; gluconeogenesis. In terms of biological role, involved in the gluconeogenesis. Catalyzes the conversion of oxaloacetate (OAA) to phosphoenolpyruvate (PEP) through direct phosphoryl transfer between the nucleoside triphosphate and OAA. This chain is Phosphoenolpyruvate carboxykinase (ATP), found in Azobacteroides pseudotrichonymphae genomovar. CFP2.